Consider the following 668-residue polypeptide: MKHYAIQPANLEFNAEGTPVSRDFDDVYFSNDNGLEETRYVFLGGNQLEARFPEHPHPLFVVAESGFGTGLNFLTLWQAFDQFREAHPQAQLQRLHFISFEKFPLARADLALAHHHWPELAPWAEQLQAQWPMPLPGCHRLLFDEGHVTLDLWFGDINELTSQLDDSLNQKVDAWFLDGFAPAKNPDMWTQNLFKAMARLARPGGTLATFTSAGFVRRGLQEAGFSMQKRKGFGRKREMLCGVMEQTLPLPCSTPWFNRTGSNKQEAAIIGGGIASALLSLALLRRGWQVTLYCADEAPALGASGNRQGALYPLLSKHDEALNRFFSNAFTFARRFYDQLPVKFDHDWCGVTQLGWDEKSQHKIAQMLSMDLPAELAVAVEANAVEQITGVATNCSGITYPEGGWLCPAELTRNVLELAQQQGLQIRYQHQLQDLSRKDDGWLLNFAGDQQATHSVVVLANGHQISRFSQTSSLPVYSVAGQVSHIPTTPELAKLKQVLCYDGYLTPQNPANQHHCIGASYHRGSEDTAYSEDDQQQNRQRLIDCFPQAQWAKAVDVSDKEARCGVRCATRDHLPMVGNVPDYDATLVEYASLAEKKDEAVSAPVYDDLFMFAALGSRGLCSAPLCAEILAAQMSEEPIPMDASTLAALNPNRLWVRKLLKGKAVKAG.

The tRNA (mnm(5)s(2)U34)-methyltransferase stretch occupies residues 1–245; it reads MKHYAIQPAN…KREMLCGVME (245 aa). An FAD-dependent cmnm(5)s(2)U34 oxidoreductase region spans residues 270–668; it reads IGGGIASALL…LLKGKAVKAG (399 aa).

This sequence in the N-terminal section; belongs to the methyltransferase superfamily. tRNA (mnm(5)s(2)U34)-methyltransferase family. In the C-terminal section; belongs to the DAO family. It depends on FAD as a cofactor.

The protein resides in the cytoplasm. It carries out the reaction 5-aminomethyl-2-thiouridine(34) in tRNA + S-adenosyl-L-methionine = 5-methylaminomethyl-2-thiouridine(34) in tRNA + S-adenosyl-L-homocysteine + H(+). In terms of biological role, catalyzes the last two steps in the biosynthesis of 5-methylaminomethyl-2-thiouridine (mnm(5)s(2)U) at the wobble position (U34) in tRNA. Catalyzes the FAD-dependent demodification of cmnm(5)s(2)U34 to nm(5)s(2)U34, followed by the transfer of a methyl group from S-adenosyl-L-methionine to nm(5)s(2)U34, to form mnm(5)s(2)U34. This chain is tRNA 5-methylaminomethyl-2-thiouridine biosynthesis bifunctional protein MnmC, found in Escherichia coli (strain SMS-3-5 / SECEC).